The following is a 402-amino-acid chain: Propionate kinase (402 aa).

Residues Asn11 and Lys18 each contribute to the ATP site. Asn11 is a binding site for Mg(2+). Residue Arg86 coordinates substrate. The active-site Proton donor/acceptor is Asp143. Residues His175, 203-207, 278-280, and 326-330 contribute to the ATP site; these read HLGNG, DLR, and GIGEN.

It belongs to the acetokinase family. TdcD subfamily. Homodimer. It depends on Mg(2+) as a cofactor.

It carries out the reaction propanoate + ATP = propanoyl phosphate + ADP. It participates in amino-acid degradation; L-threonine degradation via propanoate pathway; propanoate from L-threonine: step 4/4. In terms of biological role, catalyzes the conversion of propionyl phosphate and ADP to propionate and ATP. The sequence is that of Propionate kinase from Escherichia coli O6:H1 (strain CFT073 / ATCC 700928 / UPEC).